Reading from the N-terminus, the 602-residue chain is UvrABC system protein C (602 aa).

Residues 17 to 94 (KTSGCYKMYS…IKKYKPTYNI (78 aa)) enclose the GIY-YIG domain. The UVR domain occupies 199-234 (SKLLNDIEIKMKEVIMKENFEAAIKLKETKKSLIEI).

This sequence belongs to the UvrC family. As to quaternary structure, interacts with UvrB in an incision complex.

Its subcellular location is the cytoplasm. Functionally, the UvrABC repair system catalyzes the recognition and processing of DNA lesions. UvrC both incises the 5' and 3' sides of the lesion. The N-terminal half is responsible for the 3' incision and the C-terminal half is responsible for the 5' incision. The protein is UvrABC system protein C of Borrelia duttonii (strain Ly).